The chain runs to 554 residues: Valerianol synthase TPS1A (554 aa).

2 residues coordinate Mg(2+): D307 and D311. The short motif at 326 to 330 (VQRWD) is the DDXXD motif element. Mg(2+) contacts are provided by D452, S456, and E460.

This sequence belongs to the terpene synthase family. The cofactor is Mg(2+). In terms of tissue distribution, expressed in flowers.

It catalyses the reaction (2E,6E)-farnesyl diphosphate + H2O = valerianol + diphosphate. The protein operates within secondary metabolite biosynthesis; terpenoid biosynthesis. Its function is as follows. Terpene synthase that catalyzes the biosynthesis of the terpene valerianol, which is a volatile compound of floral scent. The polypeptide is Valerianol synthase TPS1A (Camellia hiemalis (Camellia)).